A 438-amino-acid chain; its full sequence is Gamma-glutamyl phosphate reductase (438 aa).

The protein belongs to the gamma-glutamyl phosphate reductase family.

Its subcellular location is the cytoplasm. It catalyses the reaction L-glutamate 5-semialdehyde + phosphate + NADP(+) = L-glutamyl 5-phosphate + NADPH + H(+). The protein operates within amino-acid biosynthesis; L-proline biosynthesis; L-glutamate 5-semialdehyde from L-glutamate: step 2/2. Its function is as follows. Catalyzes the NADPH-dependent reduction of L-glutamate 5-phosphate into L-glutamate 5-semialdehyde and phosphate. The product spontaneously undergoes cyclization to form 1-pyrroline-5-carboxylate. This Prochlorococcus marinus (strain MIT 9303) protein is Gamma-glutamyl phosphate reductase.